The primary structure comprises 434 residues: D-amino acid dehydrogenase (434 aa).

Residue Val3 to Trp17 participates in FAD binding.

It belongs to the DadA oxidoreductase family. Requires FAD as cofactor.

The enzyme catalyses a D-alpha-amino acid + A + H2O = a 2-oxocarboxylate + AH2 + NH4(+). Its pathway is amino-acid degradation; D-alanine degradation; NH(3) and pyruvate from D-alanine: step 1/1. Its function is as follows. Oxidative deamination of D-amino acids. The chain is D-amino acid dehydrogenase from Proteus mirabilis (strain HI4320).